Here is a 420-residue protein sequence, read N- to C-terminus: Exodeoxyribonuclease 7 large subunit (420 aa).

Belongs to the XseA family. Heterooligomer composed of large and small subunits.

The protein localises to the cytoplasm. It carries out the reaction Exonucleolytic cleavage in either 5'- to 3'- or 3'- to 5'-direction to yield nucleoside 5'-phosphates.. Bidirectionally degrades single-stranded DNA into large acid-insoluble oligonucleotides, which are then degraded further into small acid-soluble oligonucleotides. The polypeptide is Exodeoxyribonuclease 7 large subunit (Helicobacter pylori (strain G27)).